The primary structure comprises 443 residues: MSLAGLKSAPGGALRGIVRAPGDKSISHRSMILGALATGTTTVEGLLEGDDVLATARAMQAFGARIEREGVGRWRIEGKGGFEEPVDVIDCGNAGTGVRLIMGAAAGFAMCATFTGDQSLRGRPMGRVLDPLARMGATWLGRDKGRLPLTLKGGNLRGLNYTLPMASAQVKSAVLLAGLHAEGGVEVIEPEATRDHTERMLRAFGAEVIVEDRKAGDKTFRHVRLPEGQKLTGTHVAVPGDPSSAAFPLVAALIVPGSEVTVEGVMLNELRTGLFTTLQEMGADLVISNVRVASGEEVGDITARYSQLKGVVVPPERAPSMIDEYPILAVAAAFASGETVMRGVGEMRVKESDRISLTANGLKACGVQVVEEPEGFIVTGTGQPPKGGATVVTHGDHRIAMSHLILGMAAQAEVAVDEPGMIATSFPGFADLMRGLGATLAEA.

3-phosphoshikimate contacts are provided by Lys24, Ser25, and Arg29. Position 24 (Lys24) interacts with phosphoenolpyruvate. Phosphoenolpyruvate is bound by residues Gly95 and Arg123. 4 residues coordinate 3-phosphoshikimate: Ser167, Gln169, Asp323, and Lys350. Gln169 serves as a coordination point for phosphoenolpyruvate. Residue Asp323 is the Proton acceptor of the active site. The phosphoenolpyruvate site is built by Arg354 and Arg398.

The protein belongs to the EPSP synthase family. Monomer.

Its subcellular location is the cytoplasm. It catalyses the reaction 3-phosphoshikimate + phosphoenolpyruvate = 5-O-(1-carboxyvinyl)-3-phosphoshikimate + phosphate. It functions in the pathway metabolic intermediate biosynthesis; chorismate biosynthesis; chorismate from D-erythrose 4-phosphate and phosphoenolpyruvate: step 6/7. Functionally, catalyzes the transfer of the enolpyruvyl moiety of phosphoenolpyruvate (PEP) to the 5-hydroxyl of shikimate-3-phosphate (S3P) to produce enolpyruvyl shikimate-3-phosphate and inorganic phosphate. The sequence is that of 3-phosphoshikimate 1-carboxyvinyltransferase from Caulobacter vibrioides (strain ATCC 19089 / CIP 103742 / CB 15) (Caulobacter crescentus).